Reading from the N-terminus, the 157-residue chain is Mitochondrial inner membrane protease subunit 1 (157 aa).

Active-site residues include Ser-35 and Lys-80.

Belongs to the peptidase S26 family. IMP1 subfamily. As to quaternary structure, heterodimer of 2 subunits, imp1 and imp2.

Its subcellular location is the mitochondrion inner membrane. In terms of biological role, catalyzes the removal of transit peptides required for the targeting of proteins from the mitochondrial matrix, across the inner membrane, into the inter-membrane space. The chain is Mitochondrial inner membrane protease subunit 1 (imp1) from Schizosaccharomyces pombe (strain 972 / ATCC 24843) (Fission yeast).